Consider the following 34-residue polypeptide: Aspartate aminotransferase 2 (34 aa).

The protein belongs to the class-I pyridoxal-phosphate-dependent aminotransferase family. In terms of assembly, homodimer. Requires pyridoxal 5'-phosphate as cofactor.

The catalysed reaction is L-aspartate + 2-oxoglutarate = oxaloacetate + L-glutamate. Important for the metabolism of amino acids and Krebs-cycle related organic acids. In plants, it is involved in nitrogen metabolism and in aspects of carbon and energy metabolism. In Pseudotsuga menziesii (Douglas-fir), this protein is Aspartate aminotransferase 2.